The following is a 317-amino-acid chain: Brain-specific serine protease 4 (317 aa).

A signal peptide spans 1–32 (MVVSGAPPALGGGCLGTFTSLLLLASTAILNA). The Peptidase S1 domain maps to 50 to 290 (VVGGEDSTDS…HRSWVEKIVQ (241 aa)). Asn-70 carries an N-linked (GlcNAc...) asparagine glycan. Residues Cys-75 and Cys-91 are joined by a disulfide bond. Residues His-90 and Asp-141 each act as charge relay system in the active site. Intrachain disulfides connect Cys-175–Cys-248, Cys-208–Cys-227, and Cys-238–Cys-266. Ser-242 functions as the Charge relay system in the catalytic mechanism.

It belongs to the peptidase S1 family. As to expression, expressed abundantly in the epithelial cells of the airways, including trachea, esophagus and fetal lung. Scarce in adult lung. Expressed at low levels in placenta, pancreas, prostate and thyroid gland.

The protein resides in the secreted. Functionally, preferentially cleaves the synthetic substrate H-D-Leu-Thr-Arg-pNA compared to tosyl-Gly-Pro-Arg-pNA. In Homo sapiens (Human), this protein is Brain-specific serine protease 4 (PRSS22).